The sequence spans 341 residues: Ribosomal RNA small subunit methyltransferase H (341 aa).

Residues 47–49 (GGY), aspartate 64, phenylalanine 91, aspartate 109, and glutamine 116 contribute to the S-adenosyl-L-methionine site.

It belongs to the methyltransferase superfamily. RsmH family.

Its subcellular location is the cytoplasm. The enzyme catalyses cytidine(1402) in 16S rRNA + S-adenosyl-L-methionine = N(4)-methylcytidine(1402) in 16S rRNA + S-adenosyl-L-homocysteine + H(+). Functionally, specifically methylates the N4 position of cytidine in position 1402 (C1402) of 16S rRNA. In Rhizobium johnstonii (strain DSM 114642 / LMG 32736 / 3841) (Rhizobium leguminosarum bv. viciae), this protein is Ribosomal RNA small subunit methyltransferase H.